Consider the following 471-residue polypeptide: ATP synthase subunit beta (471 aa).

156-163 is a binding site for ATP; sequence GGAGVGKT.

Belongs to the ATPase alpha/beta chains family. In terms of assembly, F-type ATPases have 2 components, CF(1) - the catalytic core - and CF(0) - the membrane proton channel. CF(1) has five subunits: alpha(3), beta(3), gamma(1), delta(1), epsilon(1). CF(0) has three main subunits: a(1), b(2) and c(9-12). The alpha and beta chains form an alternating ring which encloses part of the gamma chain. CF(1) is attached to CF(0) by a central stalk formed by the gamma and epsilon chains, while a peripheral stalk is formed by the delta and b chains.

It is found in the cell membrane. It catalyses the reaction ATP + H2O + 4 H(+)(in) = ADP + phosphate + 5 H(+)(out). Functionally, produces ATP from ADP in the presence of a proton gradient across the membrane. The catalytic sites are hosted primarily by the beta subunits. The chain is ATP synthase subunit beta from Mycoplasmoides gallisepticum (strain R(low / passage 15 / clone 2)) (Mycoplasma gallisepticum).